The primary structure comprises 93 residues: Small ribosomal subunit protein bS18 (93 aa).

The protein belongs to the bacterial ribosomal protein bS18 family. Part of the 30S ribosomal subunit. Forms a tight heterodimer with protein bS6.

In terms of biological role, binds as a heterodimer with protein bS6 to the central domain of the 16S rRNA, where it helps stabilize the platform of the 30S subunit. This Paracidovorax citrulli (strain AAC00-1) (Acidovorax citrulli) protein is Small ribosomal subunit protein bS18.